The chain runs to 379 residues: Phospholipase A1 (379 aa).

The first 20 residues, 1–20, serve as a signal peptide directing secretion; that stretch reads MKFITAILVIFCVYLLSTAG. The propeptide occupies 21 to 73; sequence DSKILPLKKLPSKIFGHLKSHVDNTVKKPLKVFGHLKSHVENSVGPLRMNKLT. Residues C76 and C154 are joined by a disulfide bond. N126 carries an N-linked (GlcNAc...) asparagine glycan. Residue S204 is the Nucleophile of the active site. The active-site Charge relay system is D232. 2 disulfide bridges follow: C243-C248 and C285-C291. H293 functions as the Charge relay system in the catalytic mechanism.

It belongs to the AB hydrolase superfamily. Lipase family. Contains five disulfide bonds. Expressed by the venom gland.

It is found in the secreted. The catalysed reaction is a 1,2-diacyl-sn-glycero-3-phosphocholine + H2O = a 2-acyl-sn-glycero-3-phosphocholine + a fatty acid + H(+). Its function is as follows. Catalyzes the hydrolysis of phosphatidylcholine with phospholipase A1 activity. May act as an allergen and induce hemolytic activity. This Dinoponera quadriceps (South American ant) protein is Phospholipase A1.